A 28-amino-acid chain; its full sequence is Beta-bungarotoxin B chain-like (28 aa).

The signal sequence occupies residues 1–24 (MSSGGLLLLLGLLTLCAELTPVSS).

As to quaternary structure, heterodimer; disulfide-linked. The A chains have phospholipase A2 activity and the B chains show homology with the basic protease inhibitors. As to expression, expressed by the venom gland.

The protein resides in the secreted. In terms of biological role, beta-1-bungarotoxin is a presynaptic neurotoxin of the venom. The B chain is homologous to venom basic protease inhibitors but has no protease inhibitor activity and blocks voltage-gated potassium channels (Kv). This Bungarus multicinctus (Many-banded krait) protein is Beta-bungarotoxin B chain-like.